Here is a 333-residue protein sequence, read N- to C-terminus: L-lactate dehydrogenase B chain (333 aa).

NAD(+) is bound by residues Gly-29–Lys-57 and Arg-99. Substrate is bound by residues Arg-106, Asn-138, and Arg-169. Position 138 (Asn-138) interacts with NAD(+). His-193 functions as the Proton acceptor in the catalytic mechanism. Thr-248 contributes to the substrate binding site.

This sequence belongs to the LDH/MDH superfamily. LDH family. Homotetramer.

Its subcellular location is the cytoplasm. The enzyme catalyses (S)-lactate + NAD(+) = pyruvate + NADH + H(+). The protein operates within fermentation; pyruvate fermentation to lactate; (S)-lactate from pyruvate: step 1/1. Its function is as follows. Interconverts simultaneously and stereospecifically pyruvate and lactate with concomitant interconversion of NADH and NAD(+). The chain is L-lactate dehydrogenase B chain (LDHB) from Trachemys scripta elegans (Red-eared slider turtle).